Reading from the N-terminus, the 308-residue chain is Paired box protein 3 homolog (308 aa).

Positions 13 to 140 form a DNA-binding region, paired; that stretch reads GQGRVNQLGG…PAIKRLIGNK (128 aa). A PAI subdomain region spans residues 16 to 72; that stretch reads RVNQLGGVFINGRPLPIHVRHAIISMAKKGIKPCHISRQLKVSHGAVSKILNRYAET. The interval 92–140 is RED subdomain; it reads AVEKEILIACDENPQMSAAELRDWLIHKDICTKGNAPTVPAIKRLIGNK. The disordered stretch occupies residues 168–191; sequence CSKSSSDDEEGSSPSNDASSRRNR. The homeobox DNA-binding region spans 187–246; sequence SRRNRTSFTAEQLDVLENAFRADTYPHANARESISKETGLSEEKIMTWFSNRRARCRKNM.

It belongs to the paired homeobox family.

Its subcellular location is the nucleus. In terms of biological role, transcriptional activator. Regulates the lateral/ventral epidermal cell fate decision. The polypeptide is Paired box protein 3 homolog (Caenorhabditis elegans).